The primary structure comprises 59 residues: Large ribosomal subunit protein bL32 (59 aa).

The span at 1-16 (MAVPKRKTSPSRRGMR) shows a compositional bias: basic residues. A disordered region spans residues 1–20 (MAVPKRKTSPSRRGMRRSHD).

Belongs to the bacterial ribosomal protein bL32 family.

This chain is Large ribosomal subunit protein bL32, found in Novosphingobium aromaticivorans (strain ATCC 700278 / DSM 12444 / CCUG 56034 / CIP 105152 / NBRC 16084 / F199).